A 182-amino-acid chain; its full sequence is Large ribosomal subunit protein uL6 (182 aa).

The protein belongs to the universal ribosomal protein uL6 family. As to quaternary structure, part of the 50S ribosomal subunit.

This protein binds to the 23S rRNA, and is important in its secondary structure. It is located near the subunit interface in the base of the L7/L12 stalk, and near the tRNA binding site of the peptidyltransferase center. The sequence is that of Large ribosomal subunit protein uL6 from Aeropyrum pernix (strain ATCC 700893 / DSM 11879 / JCM 9820 / NBRC 100138 / K1).